The primary structure comprises 118 residues: Large ribosomal subunit protein uL18 (118 aa).

The protein belongs to the universal ribosomal protein uL18 family. Part of the 50S ribosomal subunit; part of the 5S rRNA/L5/L18/L25 subcomplex. Contacts the 5S and 23S rRNAs.

This is one of the proteins that bind and probably mediate the attachment of the 5S RNA into the large ribosomal subunit, where it forms part of the central protuberance. This chain is Large ribosomal subunit protein uL18, found in Parvibaculum lavamentivorans (strain DS-1 / DSM 13023 / NCIMB 13966).